The chain runs to 268 residues: 4-hydroxy-tetrahydrodipicolinate reductase (268 aa).

Residues 8–13 (GGGGKM) and Glu-34 each bind NAD(+). Lys-35 lines the NADP(+) pocket. NAD(+) is bound by residues 98-100 (GST) and 122-125 (APNM). His-155 serves as the catalytic Proton donor/acceptor. His-156 contacts (S)-2,3,4,5-tetrahydrodipicolinate. Lys-159 functions as the Proton donor in the catalytic mechanism. (S)-2,3,4,5-tetrahydrodipicolinate is bound at residue 165 to 166 (GT).

It belongs to the DapB family.

The protein resides in the cytoplasm. The catalysed reaction is (S)-2,3,4,5-tetrahydrodipicolinate + NAD(+) + H2O = (2S,4S)-4-hydroxy-2,3,4,5-tetrahydrodipicolinate + NADH + H(+). The enzyme catalyses (S)-2,3,4,5-tetrahydrodipicolinate + NADP(+) + H2O = (2S,4S)-4-hydroxy-2,3,4,5-tetrahydrodipicolinate + NADPH + H(+). Its pathway is amino-acid biosynthesis; L-lysine biosynthesis via DAP pathway; (S)-tetrahydrodipicolinate from L-aspartate: step 4/4. In terms of biological role, catalyzes the conversion of 4-hydroxy-tetrahydrodipicolinate (HTPA) to tetrahydrodipicolinate. In Syntrophus aciditrophicus (strain SB), this protein is 4-hydroxy-tetrahydrodipicolinate reductase.